Consider the following 923-residue polypeptide: Isoleucine--tRNA ligase (923 aa).

The 'HIGH' region motif lies at 57 to 67 (PYANGDIHMGH). Glutamate 553 is an L-isoleucyl-5'-AMP binding site. Residues 594–598 (KMSKS) carry the 'KMSKS' region motif. Position 597 (lysine 597) interacts with ATP. Cysteine 888, cysteine 891, cysteine 908, and cysteine 911 together coordinate Zn(2+).

The protein belongs to the class-I aminoacyl-tRNA synthetase family. IleS type 1 subfamily. Monomer. It depends on Zn(2+) as a cofactor.

Its subcellular location is the cytoplasm. The enzyme catalyses tRNA(Ile) + L-isoleucine + ATP = L-isoleucyl-tRNA(Ile) + AMP + diphosphate. Its function is as follows. Catalyzes the attachment of isoleucine to tRNA(Ile). As IleRS can inadvertently accommodate and process structurally similar amino acids such as valine, to avoid such errors it has two additional distinct tRNA(Ile)-dependent editing activities. One activity is designated as 'pretransfer' editing and involves the hydrolysis of activated Val-AMP. The other activity is designated 'posttransfer' editing and involves deacylation of mischarged Val-tRNA(Ile). This is Isoleucine--tRNA ligase from Shouchella clausii (strain KSM-K16) (Alkalihalobacillus clausii).